The chain runs to 716 residues: Polyribonucleotide nucleotidyltransferase (716 aa).

Asp-480 and Asp-486 together coordinate Mg(2+). The region spanning 547–606 (PKIVQLQIDIDKISLVIGSTGKTVKAITDEFEVKVQIEQNGKIILFGDDDFKMQKAKERI) is the KH domain. One can recognise an S1 motif domain in the interval 616–711 (GEIYEGTVKK…KFGKIDLEIV (96 aa)).

It belongs to the polyribonucleotide nucleotidyltransferase family. Mg(2+) is required as a cofactor.

The protein resides in the cytoplasm. The catalysed reaction is RNA(n+1) + phosphate = RNA(n) + a ribonucleoside 5'-diphosphate. In terms of biological role, involved in mRNA degradation. Catalyzes the phosphorolysis of single-stranded polyribonucleotides processively in the 3'- to 5'-direction. The sequence is that of Polyribonucleotide nucleotidyltransferase from Borreliella burgdorferi (strain ATCC 35210 / DSM 4680 / CIP 102532 / B31) (Borrelia burgdorferi).